Here is a 215-residue protein sequence, read N- to C-terminus: ATP-dependent Clp protease proteolytic subunit 1 (215 aa).

Ser111 acts as the Nucleophile in catalysis. The active site involves His136.

This sequence belongs to the peptidase S14 family. As to quaternary structure, fourteen ClpP subunits assemble into 2 heptameric rings which stack back to back to give a disk-like structure with a central cavity, resembling the structure of eukaryotic proteasomes.

It localises to the cytoplasm. It carries out the reaction Hydrolysis of proteins to small peptides in the presence of ATP and magnesium. alpha-casein is the usual test substrate. In the absence of ATP, only oligopeptides shorter than five residues are hydrolyzed (such as succinyl-Leu-Tyr-|-NHMec, and Leu-Tyr-Leu-|-Tyr-Trp, in which cleavage of the -Tyr-|-Leu- and -Tyr-|-Trp bonds also occurs).. Cleaves peptides in various proteins in a process that requires ATP hydrolysis. Has a chymotrypsin-like activity. Plays a major role in the degradation of misfolded proteins. The chain is ATP-dependent Clp protease proteolytic subunit 1 from Gluconobacter oxydans (strain 621H) (Gluconobacter suboxydans).